A 269-amino-acid polypeptide reads, in one-letter code: Protein tsct-1 (269 aa).

This sequence belongs to the TSC-22/Dip/Bun family.

The sequence is that of Protein tsct-1 from Caenorhabditis elegans.